Reading from the N-terminus, the 307-residue chain is MSMADRDGVIWYDGELVQWRDATTHVLTHTLHYGMGVFEGVRAYDTPQGTAIFRLQAHTDRLFDSAHIMNMQIPYSRDEINEATRAAVRENNLESAYIRPMVFYGSEGMGLRASGLKVHVIIAAWSWGAYMGEEALQQGIKVRTSSFTRHHVNISMTRAKSNGAYINSMLALQEAISGGADEAMMLDPEGYVAEGSGENIFIIKDGVIYTPEVTACLNGITRNTILTLAAEHGFKLVEKRITRDEVYIADEAFFTGTAAEVTPIREVDGRKIGAGRRGPVTEKLQKAYFDLVSGKTEAHAEWRTLVK.

The residue at position 160 (lysine 160) is an N6-(pyridoxal phosphate)lysine.

Belongs to the class-IV pyridoxal-phosphate-dependent aminotransferase family. The cofactor is pyridoxal 5'-phosphate.

It catalyses the reaction L-leucine + 2-oxoglutarate = 4-methyl-2-oxopentanoate + L-glutamate. It carries out the reaction L-isoleucine + 2-oxoglutarate = (S)-3-methyl-2-oxopentanoate + L-glutamate. The catalysed reaction is L-valine + 2-oxoglutarate = 3-methyl-2-oxobutanoate + L-glutamate. It functions in the pathway amino-acid biosynthesis; L-isoleucine biosynthesis; L-isoleucine from 2-oxobutanoate: step 4/4. It participates in amino-acid biosynthesis; L-leucine biosynthesis; L-leucine from 3-methyl-2-oxobutanoate: step 4/4. The protein operates within amino-acid biosynthesis; L-valine biosynthesis; L-valine from pyruvate: step 4/4. Functionally, acts on leucine, isoleucine and valine. This chain is Branched-chain-amino-acid aminotransferase (ilvE), found in Pseudomonas aeruginosa (strain ATCC 15692 / DSM 22644 / CIP 104116 / JCM 14847 / LMG 12228 / 1C / PRS 101 / PAO1).